The primary structure comprises 98 residues: Integration host factor subunit beta (98 aa).

Belongs to the bacterial histone-like protein family. As to quaternary structure, heterodimer of an alpha and a beta chain.

Functionally, this protein is one of the two subunits of integration host factor, a specific DNA-binding protein that functions in genetic recombination as well as in transcriptional and translational control. The protein is Integration host factor subunit beta of Teredinibacter turnerae (strain ATCC 39867 / T7901).